Consider the following 475-residue polypeptide: 3-hydroxyacyl-CoA dehydrogenase-like protein LAM1 (475 aa).

99–104 provides a ligand contact to NAD(+); that stretch reads GTRPFA. Lys-149 contacts CoA. Asn-245 provides a ligand contact to NAD(+).

This sequence belongs to the 3-hydroxyacyl-CoA dehydrogenase family.

Its pathway is mycotoxin biosynthesis. Its function is as follows. 3-hydroxyacyl-CoA dehydrogenase-like protein; part of the Tox1A locus, one of the 2 loci that mediate the biosynthesis of T-toxin, a family of linear polyketides 37 to 45 carbons in length, of which the major component is 41 carbons, and which leads to high virulence to maize. One of the PKSs (PKS1 or PKS2) could synthesize a precursor, used subsequently by the other PKS as starter unit, to add additional carbons. Variability in the length of the final carbon backbone C35-47 could be achieved by varying the number of condensation cycles, or use of different starter or extender units or might be due to decarboxylation of the penultimate product, catalyzed by DEC1. Additional proteins are required for the biosynthesis of T-toxin, including oxidoreductases RED1, RED2, RED3, LAM1 and OXI1, as well as esterase TOX9. This chain is 3-hydroxyacyl-CoA dehydrogenase-like protein LAM1, found in Cochliobolus heterostrophus (strain C4 / ATCC 48331 / race T) (Southern corn leaf blight fungus).